Reading from the N-terminus, the 969-residue chain is RNA polymerase-associated protein RapA (969 aa).

The region spanning 164–334 is the Helicase ATP-binding domain; the sequence is EVGRRHAPRV…FARLRLLDPD (171 aa). 177–184 contacts ATP; that stretch reads DEVGLGKT. The DEAH box motif lies at 280–283; that stretch reads DEAH. In terms of domain architecture, Helicase C-terminal spans 492-686; that stretch reads RVNWLLEKVK…ELKSQLEQGR (195 aa).

The protein belongs to the SNF2/RAD54 helicase family. RapA subfamily. In terms of assembly, interacts with the RNAP. Has a higher affinity for the core RNAP than for the holoenzyme. Its ATPase activity is stimulated by binding to RNAP.

Transcription regulator that activates transcription by stimulating RNA polymerase (RNAP) recycling in case of stress conditions such as supercoiled DNA or high salt concentrations. Probably acts by releasing the RNAP, when it is trapped or immobilized on tightly supercoiled DNA. Does not activate transcription on linear DNA. Probably not involved in DNA repair. The polypeptide is RNA polymerase-associated protein RapA (Vibrio parahaemolyticus serotype O3:K6 (strain RIMD 2210633)).